The chain runs to 245 residues: 3-deoxy-manno-octulosonate cytidylyltransferase (245 aa).

Belongs to the KdsB family.

The protein localises to the cytoplasm. It catalyses the reaction 3-deoxy-alpha-D-manno-oct-2-ulosonate + CTP = CMP-3-deoxy-beta-D-manno-octulosonate + diphosphate. It functions in the pathway nucleotide-sugar biosynthesis; CMP-3-deoxy-D-manno-octulosonate biosynthesis; CMP-3-deoxy-D-manno-octulosonate from 3-deoxy-D-manno-octulosonate and CTP: step 1/1. It participates in bacterial outer membrane biogenesis; lipopolysaccharide biosynthesis. Functionally, activates KDO (a required 8-carbon sugar) for incorporation into bacterial lipopolysaccharide in Gram-negative bacteria. The chain is 3-deoxy-manno-octulosonate cytidylyltransferase from Rhodopseudomonas palustris (strain HaA2).